Here is a 78-residue protein sequence, read N- to C-terminus: Sec-independent protein translocase protein TatA (78 aa).

Residues 1–21 form a helical membrane-spanning segment; that stretch reads MGSLSIWHWIVVIAVVLLLFG. Basic and acidic residues predominate over residues 43 to 60; sequence LQDDEKTAEKSEPVKSID. Residues 43–78 form a disordered region; it reads LQDDEKTAEKSEPVKSIDHTSTPGATNRTDVGSKAV. Positions 61–72 are enriched in polar residues; the sequence is HTSTPGATNRTD.

It belongs to the TatA/E family. The Tat system comprises two distinct complexes: a TatABC complex, containing multiple copies of TatA, TatB and TatC subunits, and a separate TatA complex, containing only TatA subunits. Substrates initially bind to the TatABC complex, which probably triggers association of the separate TatA complex to form the active translocon.

It is found in the cell inner membrane. Its function is as follows. Part of the twin-arginine translocation (Tat) system that transports large folded proteins containing a characteristic twin-arginine motif in their signal peptide across membranes. TatA could form the protein-conducting channel of the Tat system. The sequence is that of Sec-independent protein translocase protein TatA from Rhodopseudomonas palustris (strain ATCC BAA-98 / CGA009).